We begin with the raw amino-acid sequence, 252 residues long: Probable transcriptional regulatory protein Tmel_0985 (252 aa).

It belongs to the TACO1 family.

It is found in the cytoplasm. The polypeptide is Probable transcriptional regulatory protein Tmel_0985 (Thermosipho melanesiensis (strain DSM 12029 / CIP 104789 / BI429)).